We begin with the raw amino-acid sequence, 641 residues long: Tegument protein UL35 (641 aa).

3 disordered regions span residues 353-373 (ERGEFGDEDEEQENDGEPREA), 500-572 (ASSS…PRQR), and 587-641 (AYSH…LRHL). Residues 358 to 367 (GDEDEEQEND) are compositionally biased toward acidic residues. The span at 500–563 (ASSSSASSSS…LSGSHGISSA (64 aa)) shows a compositional bias: low complexity. The span at 589-599 (SHHRRHRRRRS) shows a compositional bias: basic residues. Positions 632–641 (DDLAENLRHL) are enriched in basic and acidic residues.

It belongs to the herpesviridae pp85 family. In terms of assembly, interacts with UL82. Interacts with isoform UL35A. Interacts with host UBP7; this interaction significantly inhibits the ability of USP7 to form nuclear bodies. Interacts with host DCAF1 (via C-terminus). Interacts with host SNX5; this interaction allows proper gB localization during viral assembly. Interacts with host TBK1; this interaction prevents type I interferon production. Interacts with UL82. Interacts with isoform UL35. Interacts with host UBP7; this interaction significantly inhibits the ability of USP7 to form nuclear bodies. Interacts with host SNX5; this interaction allows proper gB localization during viral assembly.

The protein resides in the virion tegument. The protein localises to the host nucleus. It is found in the host cytoplasm. Functionally, plays important role in immediate-early gene expression through interaction with UL82. Forms nuclear bodies in host nucleus, independently of PML. In turn, UL35 nuclear bodies associate with and remodel PML bodies. Through interaction with host DCAF1, causes cells to accumulate in the G2 phase of the cell cycle by inducing a DNA damage response. Regulates viral assembly by controlling the localization of the essential gB through regulation of a retrograde transport pathway. This modulation occurs via binding and inhibition of host sorting nexin 5/SNX5. Also plays a role in the inhibition of pattern recognition receptor-mediated type I interferon signaling at the level of TBK1. In terms of biological role, promotes cytoplasmic UL82 accumulation and inhibits UL35-containing nuclear bodies formation. Regulates viral assembly by controlling the localization of the essential gB through regulation of a retrograde transport pathway. This modulation occurs via binding and inhibition of host sorting nexin 5/SNX5. The chain is Tegument protein UL35 (UL35) from Homo sapiens (Human).